The chain runs to 85 residues: Colicin-E8 immunity protein in ColE6 (85 aa).

This sequence belongs to the colicins ColE2/ColE8/ColE9 and pyocins S1/S2 family.

This chain is Colicin-E8 immunity protein in ColE6 (imm), found in Escherichia coli.